Here is a 304-residue protein sequence, read N- to C-terminus: Non-specific ribonucleoside hydrolase RihC (304 aa).

Residue His-233 is part of the active site.

Belongs to the IUNH family. RihC subfamily.

Hydrolyzes both purine and pyrimidine ribonucleosides with a broad-substrate specificity. The sequence is that of Non-specific ribonucleoside hydrolase RihC from Escherichia coli (strain 55989 / EAEC).